The chain runs to 966 residues: Probable transport protein MmpL11 (966 aa).

Helical transmembrane passes span Trp13 to Gln33, Ile188 to Ala208, Val214 to Val234, Thr235 to Met255, Gly279 to Ile299, Ala311 to Ala331, Ala373 to Gly393, Thr527 to Ile547, Val557 to Trp577, Val595 to Leu615, Ala646 to Ala666, and Ile668 to Val688.

The protein belongs to the resistance-nodulation-cell division (RND) (TC 2.A.6) family. MmpL subfamily.

It localises to the cell membrane. The sequence is that of Probable transport protein MmpL11 (mmpL11) from Mycobacterium bovis (strain ATCC BAA-935 / AF2122/97).